Reading from the N-terminus, the 380-residue chain is 8-amino-7-oxononanoate synthase (380 aa).

Arg-26 provides a ligand contact to substrate. Residue 104 to 105 (GY) participates in pyridoxal 5'-phosphate binding. Position 129 (His-129) interacts with substrate. Pyridoxal 5'-phosphate-binding positions include Ser-175, 200–203 (DEAH), and 232–235 (TLSK). Residue Lys-235 is modified to N6-(pyridoxal phosphate)lysine. Thr-345 is a binding site for substrate.

This sequence belongs to the class-II pyridoxal-phosphate-dependent aminotransferase family. BioF subfamily. As to quaternary structure, homodimer. The cofactor is pyridoxal 5'-phosphate.

The catalysed reaction is 6-carboxyhexanoyl-[ACP] + L-alanine + H(+) = (8S)-8-amino-7-oxononanoate + holo-[ACP] + CO2. It participates in cofactor biosynthesis; biotin biosynthesis. Catalyzes the decarboxylative condensation of pimeloyl-[acyl-carrier protein] and L-alanine to produce 8-amino-7-oxononanoate (AON), [acyl-carrier protein], and carbon dioxide. The protein is 8-amino-7-oxononanoate synthase of Mycolicibacterium vanbaalenii (strain DSM 7251 / JCM 13017 / BCRC 16820 / KCTC 9966 / NRRL B-24157 / PYR-1) (Mycobacterium vanbaalenii).